A 205-amino-acid polypeptide reads, in one-letter code: FMN-dependent NADH:quinone oxidoreductase (205 aa).

Residues Ser10, 16 to 18 (SHS), and 96 to 99 (MYNF) each bind FMN.

It belongs to the azoreductase type 1 family. As to quaternary structure, homodimer. FMN is required as a cofactor.

The enzyme catalyses 2 a quinone + NADH + H(+) = 2 a 1,4-benzosemiquinone + NAD(+). It carries out the reaction N,N-dimethyl-1,4-phenylenediamine + anthranilate + 2 NAD(+) = 2-(4-dimethylaminophenyl)diazenylbenzoate + 2 NADH + 2 H(+). Functionally, quinone reductase that provides resistance to thiol-specific stress caused by electrophilic quinones. Also exhibits azoreductase activity. Catalyzes the reductive cleavage of the azo bond in aromatic azo compounds to the corresponding amines. This Nostoc punctiforme (strain ATCC 29133 / PCC 73102) protein is FMN-dependent NADH:quinone oxidoreductase.